The primary structure comprises 377 residues: MSCAKPHILIIEPFYGGSHKQLIGALIEGLNHGDSEIFSLPAKKWHWRARTSALHFAQLIPRDHAFRVLFASSVLSLAELIGLRPDLAACRKIVYFHENQLIYPVREVKQRDCQYGFNEILSCLAADMVLFNSQFNCNSFLDNVQPFLNMQPDFKIKHIREQIEKKCQVLYFPVNFERFPIRKECVKGETAEDLDEKCIHLIWPHRWEHDKNPKLLVDTLCQLHERQVDFKVTICGESYQEIPEEFEHIQEKLGSKLVNFGHLEREEYLKTLLTGDIVISTADHEFFGVAMLEAAFCGCYPIAPNKLVYPEIYPKENLYNTSNALTKKLYNFCRMPRVFRKQRDQFFENFNFDRFSAKELVPKYLDIFNKHIADEQS.

The protein belongs to the glycosyltransferase group 1 family. Glycosyltransferase 4 subfamily.

The enzyme catalyses queuosine(34) in tRNA(Asp) + GDP-alpha-D-mannose = O-4''-alpha-D-mannosylqueuosine(34) in tRNA(Asp) + GDP + H(+). Glycosyltransferase that specifically catalyzes mannosylation of cytoplasmic tRNA(Asp) modified with queuosine at position 34 (queuosine(34)). Mannosylates the cyclopentene moiety of queuosine(34) in tRNA(Asp) to form mannosyl-queuosine(34). This Drosophila melanogaster (Fruit fly) protein is tRNA-queuosine alpha-mannosyltransferase.